The following is a 389-amino-acid chain: Succinate--CoA ligase [ADP-forming] subunit beta (389 aa).

An ATP-grasp domain is found at 9–236; the sequence is RDLFEKHGVP…KTTADPLEEK (228 aa). Residues Lys-45, 52–54, Ala-94, and Glu-99 contribute to the ATP site; that span reads GRG. The Mg(2+) site is built by Asn-191 and Asp-205. Substrate is bound by residues Asn-256 and 318-320; that span reads GIT.

The protein belongs to the succinate/malate CoA ligase beta subunit family. As to quaternary structure, heterotetramer of two alpha and two beta subunits. Requires Mg(2+) as cofactor.

The enzyme catalyses succinate + ATP + CoA = succinyl-CoA + ADP + phosphate. The catalysed reaction is GTP + succinate + CoA = succinyl-CoA + GDP + phosphate. The protein operates within carbohydrate metabolism; tricarboxylic acid cycle; succinate from succinyl-CoA (ligase route): step 1/1. Functionally, succinyl-CoA synthetase functions in the citric acid cycle (TCA), coupling the hydrolysis of succinyl-CoA to the synthesis of either ATP or GTP and thus represents the only step of substrate-level phosphorylation in the TCA. The beta subunit provides nucleotide specificity of the enzyme and binds the substrate succinate, while the binding sites for coenzyme A and phosphate are found in the alpha subunit. The protein is Succinate--CoA ligase [ADP-forming] subunit beta of Kocuria rhizophila (strain ATCC 9341 / DSM 348 / NBRC 103217 / DC2201).